The following is a 551-amino-acid chain: Arginine--tRNA ligase (551 aa).

The 'HIGH' region motif lies at 125 to 135 (ANPTGPLHIGH).

This sequence belongs to the class-I aminoacyl-tRNA synthetase family. In terms of assembly, monomer.

It localises to the cytoplasm. It carries out the reaction tRNA(Arg) + L-arginine + ATP = L-arginyl-tRNA(Arg) + AMP + diphosphate. The protein is Arginine--tRNA ligase of Nitratidesulfovibrio vulgaris (strain DSM 19637 / Miyazaki F) (Desulfovibrio vulgaris).